Here is a 1143-residue protein sequence, read N- to C-terminus: Disease resistance protein Pikm1-TS (1143 aa).

The segment at 1–190 (MEAAAMAVTA…PLRIMGGEMQ (190 aa)) is structured coiled coil (CC) domain. The region spanning 189-258 (MQKIVFKIPM…KVGPAMFLEV (70 aa)) is the HMA domain. The HMA-like domain stretch occupies residues 191-264 (KIVFKIPMVD…FLEVSQVKED (74 aa)). The 289-residue stretch at 282–570 (HEVKTICILG…WIAEGFVSEE (289 aa)) folds into the NB-ARC domain. LRR repeat units follow at residues 681 to 706 (FKRL…ICEQ), 708 to 731 (SLRV…MRKL), 732 to 754 (KHLE…IGEL), 756 to 777 (HLRI…IREL), 778 to 800 (QHLH…VGKL), 802 to 823 (NLKI…IGEL), 824 to 848 (NHLQ…QISQ), 945 to 968 (MPNL…INGT), 979 to 1002 (DSRV…EFKF), and 1004 to 1027 (AGPA…VFRC).

This sequence belongs to the disease resistance NB-LRR family. As to quaternary structure, interacts with AVR-Pik through its N-terminal part containing the HMA-like domain. In terms of tissue distribution, constitutively expressed.

Functionally, disease resistance (R) protein that specifically recognizes the AVR-Pik effector avirulence protein from M.oryzae. Resistance proteins guard the plant against pathogens that contain an appropriate avirulence protein via an indirect interaction with this avirulence protein. That triggers a defense system including the hypersensitive response, which restricts the pathogen growth. Contribution of Pikm-2 is required to recognize the effector avirulence protein AVR-Pik. In Oryza sativa subsp. japonica (Rice), this protein is Disease resistance protein Pikm1-TS.